Here is a 152-residue protein sequence, read N- to C-terminus: Ubiquitin-conjugating enzyme E2 1 (152 aa).

The UBC core domain maps to 4-150; it reads PARKRLMRDF…VRDVVEQSWT (147 aa). Cys88 acts as the Glycyl thioester intermediate in catalysis. Residues 119 to 152 are disordered; that stretch reads NSPANSEAARMYSESKREYNRRVRDVVEQSWTAD. Over residues 131-145 the composition is skewed to basic and acidic residues; that stretch reads SESKREYNRRVRDVV.

Belongs to the ubiquitin-conjugating enzyme family. As to expression, ubiquitously expressed.

The catalysed reaction is S-ubiquitinyl-[E1 ubiquitin-activating enzyme]-L-cysteine + [E2 ubiquitin-conjugating enzyme]-L-cysteine = [E1 ubiquitin-activating enzyme]-L-cysteine + S-ubiquitinyl-[E2 ubiquitin-conjugating enzyme]-L-cysteine.. The protein operates within protein modification; protein ubiquitination. In terms of biological role, accepts the ubiquitin from the E1 complex and catalyzes its covalent attachment to other proteins. The protein is Ubiquitin-conjugating enzyme E2 1 (UBC1) of Arabidopsis thaliana (Mouse-ear cress).